Here is a 431-residue protein sequence, read N- to C-terminus: Extensin-3 (431 aa).

Positions methionine 1 to alanine 27 are cleaved as a signal peptide. 3 consecutive repeat copies span residues serine 33–tyrosine 41, serine 49–histidine 55, and serine 56–histidine 63. The interval serine 33–tyrosine 384 is 13 X 9 AA repeats of S-P-P-P-P-V-K-H-Y. The segment at threonine 42–proline 408 is disordered. Over residues serine 49–proline 59 the composition is skewed to pro residues. Positions serine 49 to histidine 391 are 13 X 7 AA repeats of S-P-P-P-V-Y-H. The tract at residues serine 56–histidine 371 is 12 X 8 AA repeats of S-P-P-P-P-K-K-H. Positions tyrosine 64 to lysine 67 are isodityrosine cross-linking. 3 consecutive repeat copies span residues serine 68–tyrosine 76, serine 77–histidine 83, and serine 84–histidine 91. Positions serine 68–proline 87 are enriched in pro residues. The segment at tyrosine 92–lysine 95 is isodityrosine cross-linking. Tandem repeats lie at residues serine 96–tyrosine 104, serine 105–histidine 111, and serine 112–histidine 119. A compositionally biased stretch (pro residues) spans serine 96–proline 115. Residues tyrosine 120–lysine 123 are isodityrosine cross-linking. Repeat copies occupy residues serine 124–tyrosine 132, serine 133–histidine 139, and serine 140–histidine 147. Over residues serine 124–proline 143 the composition is skewed to pro residues. The tract at residues tyrosine 148 to lysine 151 is isodityrosine cross-linking. 3 repeat units span residues serine 152 to tyrosine 160, serine 161 to histidine 167, and serine 168 to histidine 175. The span at serine 152 to proline 171 shows a compositional bias: pro residues. The segment at tyrosine 176 to lysine 179 is isodityrosine cross-linking. 3 repeat units span residues serine 180–tyrosine 188, serine 189–histidine 195, and serine 196–histidine 203. A compositionally biased stretch (pro residues) spans serine 180–proline 199. The tract at residues tyrosine 204–lysine 207 is isodityrosine cross-linking. Repeat copies occupy residues serine 208–tyrosine 216, serine 217–histidine 223, and serine 224–histidine 231. A compositionally biased stretch (pro residues) spans serine 208 to proline 227. Positions tyrosine 232–lysine 235 are isodityrosine cross-linking. Tandem repeats lie at residues serine 236–tyrosine 244, serine 245–histidine 251, and serine 252–histidine 259. The segment covering serine 236–proline 255 has biased composition (pro residues). The segment at tyrosine 260–lysine 263 is isodityrosine cross-linking. 3 consecutive repeat copies span residues serine 264 to tyrosine 272, serine 273 to histidine 279, and serine 280 to histidine 287. The segment covering serine 264 to proline 283 has biased composition (pro residues). Residues tyrosine 288–lysine 291 form an isodityrosine cross-linking region. 3 consecutive repeat copies span residues serine 292–tyrosine 300, serine 301–histidine 307, and serine 308–histidine 315. Pro residues predominate over residues serine 292–proline 311. The tract at residues tyrosine 316–lysine 319 is isodityrosine cross-linking. 3 tandem repeats follow at residues serine 320–tyrosine 328, serine 329–histidine 335, and serine 336–histidine 343. The span at serine 320 to proline 339 shows a compositional bias: pro residues. Residues tyrosine 344–lysine 347 are isodityrosine cross-linking. A run of 3 repeats spans residues serine 348–tyrosine 356, serine 357–histidine 363, and serine 364–histidine 371. The span at serine 348 to proline 367 shows a compositional bias: pro residues. The interval tyrosine 372 to lysine 375 is isodityrosine cross-linking. Repeat copies occupy residues serine 376 to tyrosine 384 and serine 385 to histidine 391. Residues serine 376–proline 395 show a composition bias toward pro residues. Isodityrosine cross-linking regions lie at residues tyrosine 400–lysine 403 and tyrosine 420–lysine 423.

The protein belongs to the extensin family. The proline residues of the Ser-Pro(3) repeats are hydroxylated and then O-glycosylated (arabinosylation) by HPAT1, HPAT2 and HPAT3. Around 20% of Hyp units are in the nonglycosylated form. The Ser residues are O-galactosylated. The lack of Ser-O-galactosylation does not affect Hyp-O-arabinosylation, but both types of O-glycosylation are central for the functionality of the protein. Correct Hyp-O-arabinosylation appears to be responsible for generating a bend on the EXT3 backbone around a YVY motif, which may represent a better scenario for Tyr intramolecular cross-links (isodityrosine type). In terms of processing, synthetised as soluble proteins which become insolubilised in the cell wall through the intermolecular cross-linking of Tyr on adjacent monomers. Isodityrosine (IDT) stabilizes and makes rigid the part of the polypeptide where IDT functional sites are present. In terms of tissue distribution, predominantly expressed in the roots.

It localises to the secreted. The protein resides in the primary cell wall. Structural component which strengthens the primary cell wall. Forms dendritic structures indicating a propensity for self-assembly through tyrosine cross-linking. Forms intermolecular cross-links exclusively by pulcherosine (three Tyr). Scaffold formation requires an unobstructed C-terminus of EXT3. Required for the correct positioning of the cell plate during cytokinesis in cells of the developing embryo. Extensins contain a characteristic repeat of the pentapeptide Ser-Pro(4). For this particular extensin, a typical repeat of Ser-Pro(3) is found. The sequence is that of Extensin-3 from Arabidopsis thaliana (Mouse-ear cress).